Here is a 56-residue protein sequence, read N- to C-terminus: uncharacterized protein (56 aa).

A helical transmembrane segment spans residues 6–26 (MLLIMLYMVLVVNDLILYNIL).

Its subcellular location is the membrane. This is an uncharacterized protein from Dictyostelium discoideum (Social amoeba).